Consider the following 535-residue polypeptide: Bifunctional purine biosynthesis protein PurH (535 aa).

Positions 6–151 (TRLPIRRALI…KNHKDVAIVV (146 aa)) constitute an MGS-like domain.

It belongs to the PurH family.

The catalysed reaction is (6R)-10-formyltetrahydrofolate + 5-amino-1-(5-phospho-beta-D-ribosyl)imidazole-4-carboxamide = 5-formamido-1-(5-phospho-D-ribosyl)imidazole-4-carboxamide + (6S)-5,6,7,8-tetrahydrofolate. It catalyses the reaction IMP + H2O = 5-formamido-1-(5-phospho-D-ribosyl)imidazole-4-carboxamide. It participates in purine metabolism; IMP biosynthesis via de novo pathway; 5-formamido-1-(5-phospho-D-ribosyl)imidazole-4-carboxamide from 5-amino-1-(5-phospho-D-ribosyl)imidazole-4-carboxamide (10-formyl THF route): step 1/1. Its pathway is purine metabolism; IMP biosynthesis via de novo pathway; IMP from 5-formamido-1-(5-phospho-D-ribosyl)imidazole-4-carboxamide: step 1/1. This is Bifunctional purine biosynthesis protein PurH from Pseudomonas entomophila (strain L48).